The primary structure comprises 445 residues: Polyadenylate-binding protein RBP47A (445 aa).

Positions 1 to 12 are enriched in polar residues; the sequence is MQTPNNNGSTDS. 2 disordered regions span residues 1–45 and 93–117; these read MQTP…WQQQ and AAYQ…GGDD. The segment covering 22 to 35 has biased composition (pro residues); it reads TPPPPLQQSTPPPQ. Low complexity-rich tracts occupy residues 36–45 and 93–108; these read QQQQQQWQQQ and AAYQ…SQQQ. RRM domains lie at 119 to 199, 213 to 292, and 327 to 399; these read KTLW…WASF, LSIF…IATP, and STIF…WGRS.

The protein belongs to the polyadenylate-binding RBP47 family. In terms of assembly, interacts with the poly(A) tail of mRNA in nucleus. As to expression, expressed in leaves, stems, flowers, and seedlings.

It is found in the nucleus. Its subcellular location is the cytoplasmic granule. Its function is as follows. Heterogeneous nuclear ribonucleoprotein (hnRNP)-protein binding the poly(A) tail of mRNA and probably involved in some steps of pre-mRNA maturation. This chain is Polyadenylate-binding protein RBP47A (RBP47A), found in Arabidopsis thaliana (Mouse-ear cress).